A 287-amino-acid chain; its full sequence is Elongation factor Ts (287 aa).

The interval 80–83 (TDFL) is involved in Mg(2+) ion dislocation from EF-Tu.

Belongs to the EF-Ts family.

The protein resides in the cytoplasm. Functionally, associates with the EF-Tu.GDP complex and induces the exchange of GDP to GTP. It remains bound to the aminoacyl-tRNA.EF-Tu.GTP complex up to the GTP hydrolysis stage on the ribosome. This chain is Elongation factor Ts, found in Pseudomonas syringae pv. tomato (strain ATCC BAA-871 / DC3000).